The sequence spans 441 residues: Cysteine desulfurase, mitosomal (441 aa).

Pyridoxal 5'-phosphate contacts are provided by residues A107 to T108, N189, Q217, and S237 to H239. K240 carries the post-translational modification N6-(pyridoxal phosphate)lysine. T277 serves as a coordination point for pyridoxal 5'-phosphate. The active-site Cysteine persulfide intermediate is the C367. C367 is a binding site for [2Fe-2S] cluster.

The protein belongs to the class-V pyridoxal-phosphate-dependent aminotransferase family. NifS/IscS subfamily. As to quaternary structure, interacts with ISD11. Pyridoxal 5'-phosphate serves as cofactor.

The protein resides in the mitosome. The catalysed reaction is (sulfur carrier)-H + L-cysteine = (sulfur carrier)-SH + L-alanine. In terms of biological role, catalyzes the removal of elemental sulfur from cysteine to produce alanine. It supplies the inorganic sulfur for iron-sulfur (Fe-S) clusters in mitosomes. The protein is Cysteine desulfurase, mitosomal of Trachipleistophora hominis (Microsporidian parasite).